Reading from the N-terminus, the 88-residue chain is Small ribosomal subunit protein uS15 (88 aa).

Belongs to the universal ribosomal protein uS15 family. Part of the 30S ribosomal subunit. Forms a bridge to the 50S subunit in the 70S ribosome, contacting the 23S rRNA.

Its function is as follows. One of the primary rRNA binding proteins, it binds directly to 16S rRNA where it helps nucleate assembly of the platform of the 30S subunit by binding and bridging several RNA helices of the 16S rRNA. In terms of biological role, forms an intersubunit bridge (bridge B4) with the 23S rRNA of the 50S subunit in the ribosome. This is Small ribosomal subunit protein uS15 from Psychrobacter arcticus (strain DSM 17307 / VKM B-2377 / 273-4).